The sequence spans 308 residues: Protein UL135 (308 aa).

A signal peptide spans 1–22; it reads MVWLWLGVGLLGGTGLASLVLA. Residues 105-274 form a disordered region; it reads KPEFPPARFE…TEPTTLPIVS (170 aa). Low complexity predominate over residues 126-145; sequence SIGRSPSHCSSSSSLSSSAS. Pro residues-rich tracts occupy residues 152 to 163 and 219 to 238; these read QPPPSWKPPPPP and PVTPRPFPKTPTPQKPPRNP.

It belongs to the HCMV UL135 family. In terms of assembly, interacts with host components of the WAVE2 complex ABI1, NAP1 and WAVE2. Also interacts with host ABI2 and TLN1.

Its subcellular location is the host cell membrane. The protein localises to the host Golgi apparatus. Functionally, remodels the host actin cytoskeleton in order to impair immune recognition of infected cells. Mechanistically, interacts with members of the host WAVE2 complex and redirects the complex to the plasma membrane. In turn, the efficiency of immune synapse formation is greatly reduced. The chain is Protein UL135 (UL135) from Human cytomegalovirus (strain Merlin) (HHV-5).